Consider the following 177-residue polypeptide: Nucleoside triphosphate/diphosphate phosphatase (177 aa).

The active-site Proton donor is the Arg-24. The Mg(2+) site is built by Asn-88, Asp-104, Asp-106, Asp-108, Asp-121, and Glu-124.

Belongs to the Ntdp family. The cofactor is Mg(2+).

The catalysed reaction is a ribonucleoside 5'-triphosphate + H2O = a ribonucleoside 5'-diphosphate + phosphate + H(+). It catalyses the reaction a ribonucleoside 5'-diphosphate + H2O = a ribonucleoside 5'-phosphate + phosphate + H(+). Its function is as follows. Has nucleoside phosphatase activity towards nucleoside triphosphates and nucleoside diphosphates. This chain is Nucleoside triphosphate/diphosphate phosphatase, found in Geobacillus sp. (strain WCH70).